The following is a 138-amino-acid chain: NADH dehydrogenase [ubiquinone] iron-sulfur protein 2, mitochondrial (138 aa).

Belongs to the complex I 49 kDa subunit family. As to quaternary structure, core subunit of respiratory chain NADH dehydrogenase (Complex I) which is composed of 45 different subunits. Component of the iron-sulfur (IP) fragment of the enzyme. Interacts with NDUFAF3. Interacts with NDUFAF7. Interacts with CERS2. Requires [4Fe-4S] cluster as cofactor. Dimethylation at Arg-118 by NDUFAF7 takes place after NDUFS2 assembles into the complex I, leading to stabilize the early intermediate complex.

The protein localises to the mitochondrion inner membrane. The catalysed reaction is a ubiquinone + NADH + 5 H(+)(in) = a ubiquinol + NAD(+) + 4 H(+)(out). Core subunit of the mitochondrial membrane respiratory chain NADH dehydrogenase (Complex I) which catalyzes electron transfer from NADH through the respiratory chain, using ubiquinone as an electron acceptor. Essential for the catalytic activity and assembly of complex I. Redox-sensitive, critical component of the oxygen-sensing pathway in the pulmonary vasculature which plays a key role in acute pulmonary oxygen-sensing and hypoxic pulmonary vasoconstriction. Plays an important role in carotid body sensing of hypoxia. Essential for glia-like neural stem and progenitor cell proliferation, differentiation and subsequent oligodendrocyte or neuronal maturation. The chain is NADH dehydrogenase [ubiquinone] iron-sulfur protein 2, mitochondrial from Mesocricetus auratus (Golden hamster).